The following is a 141-amino-acid chain: HTH-type transcriptional repressor NsrR (141 aa).

The HTH rrf2-type domain occupies 2 to 129 (QLTSFTDYGL…DNYTLADLVE (128 aa)). Positions 28–51 (ISEVTDVYGVSRNHMVKIINQLSR) form a DNA-binding region, H-T-H motif. Residues cysteine 91, cysteine 96, and cysteine 102 each coordinate [2Fe-2S] cluster.

Requires [2Fe-2S] cluster as cofactor.

In terms of biological role, nitric oxide-sensitive repressor of genes involved in protecting the cell against nitrosative stress. May require iron for activity. The sequence is that of HTH-type transcriptional repressor NsrR from Escherichia coli O157:H7 (strain EC4115 / EHEC).